The primary structure comprises 218 residues: Phosphatidylserine decarboxylase proenzyme (218 aa).

The Schiff-base intermediate with substrate; via pyruvic acid role is filled by Ser182. At Ser182 the chain carries Pyruvic acid (Ser); by autocatalysis.

It belongs to the phosphatidylserine decarboxylase family. PSD-A subfamily. As to quaternary structure, heterodimer of a large membrane-associated beta subunit and a small pyruvoyl-containing alpha subunit. It depends on pyruvate as a cofactor. Post-translationally, is synthesized initially as an inactive proenzyme. Formation of the active enzyme involves a self-maturation process in which the active site pyruvoyl group is generated from an internal serine residue via an autocatalytic post-translational modification. Two non-identical subunits are generated from the proenzyme in this reaction, and the pyruvate is formed at the N-terminus of the alpha chain, which is derived from the carboxyl end of the proenzyme. The post-translation cleavage follows an unusual pathway, termed non-hydrolytic serinolysis, in which the side chain hydroxyl group of the serine supplies its oxygen atom to form the C-terminus of the beta chain, while the remainder of the serine residue undergoes an oxidative deamination to produce ammonia and the pyruvoyl prosthetic group on the alpha chain.

The protein resides in the cell membrane. It catalyses the reaction a 1,2-diacyl-sn-glycero-3-phospho-L-serine + H(+) = a 1,2-diacyl-sn-glycero-3-phosphoethanolamine + CO2. It functions in the pathway phospholipid metabolism; phosphatidylethanolamine biosynthesis; phosphatidylethanolamine from CDP-diacylglycerol: step 2/2. Catalyzes the formation of phosphatidylethanolamine (PtdEtn) from phosphatidylserine (PtdSer). The sequence is that of Phosphatidylserine decarboxylase proenzyme from Oleidesulfovibrio alaskensis (strain ATCC BAA-1058 / DSM 17464 / G20) (Desulfovibrio alaskensis).